Here is a 376-residue protein sequence, read N- to C-terminus: Putative 12-oxophytodienoate reductase 13 (376 aa).

FMN contacts are provided by residues 25-27, Ala58, and Gln99; that span reads PLT. 165 to 168 serves as a coordination point for substrate; it reads HGAH. Residues Arg217, Gly301, and 322 to 323 each bind FMN; that span reads GR.

The protein belongs to the NADH:flavin oxidoreductase/NADH oxidase family. FMN is required as a cofactor.

Putative oxophytodienoate reductase that may be involved in the biosynthesis or metabolism of oxylipin signaling molecules. This chain is Putative 12-oxophytodienoate reductase 13 (OPR13), found in Oryza sativa subsp. japonica (Rice).